The chain runs to 1058 residues: Carbamoyl phosphate synthase large chain (1058 aa).

The carboxyphosphate synthetic domain stretch occupies residues 1 to 401 (MPKRKDIKTI…SLLKAIRSLE (401 aa)). ATP is bound by residues R129, R169, G175, G176, K208, I210, E215, G241, I242, H243, Q284, and E298. Residues 133-327 (RDLMNELNEP…IAKIAAKIAV (195 aa)) enclose the ATP-grasp 1 domain. Residues Q284, E298, and N300 each contribute to the Mg(2+) site. Residues Q284, E298, and N300 each contribute to the Mn(2+) site. Positions 402 to 546 (YGVHHLGLPN…YSTYEFENES (145 aa)) are oligomerization domain. The interval 547-929 (TRSDKEKIVV…ALYKGLTAAG (383 aa)) is carbamoyl phosphate synthetic domain. The region spanning 671–861 (EKLLIGLKIP…VANIAMQCIL (191 aa)) is the ATP-grasp 2 domain. Residues R707, R746, L748, E752, G777, V778, H779, S780, Q820, and E832 each contribute to the ATP site. Positions 820, 832, and 834 each coordinate Mg(2+). Mn(2+)-binding residues include Q820, E832, and N834. One can recognise an MGS-like domain in the interval 930-1058 (IKIKDYGRVL…ESMSFRVQTL (129 aa)). Residues 930–1058 (IKIKDYGRVL…ESMSFRVQTL (129 aa)) are allosteric domain.

Belongs to the CarB family. In terms of assembly, composed of two chains; the small (or glutamine) chain promotes the hydrolysis of glutamine to ammonia, which is used by the large (or ammonia) chain to synthesize carbamoyl phosphate. Tetramer of heterodimers (alpha,beta)4. Requires Mg(2+) as cofactor. The cofactor is Mn(2+).

The catalysed reaction is hydrogencarbonate + L-glutamine + 2 ATP + H2O = carbamoyl phosphate + L-glutamate + 2 ADP + phosphate + 2 H(+). The enzyme catalyses hydrogencarbonate + NH4(+) + 2 ATP = carbamoyl phosphate + 2 ADP + phosphate + 2 H(+). Its pathway is amino-acid biosynthesis; L-arginine biosynthesis; carbamoyl phosphate from bicarbonate: step 1/1. It functions in the pathway pyrimidine metabolism; UMP biosynthesis via de novo pathway; (S)-dihydroorotate from bicarbonate: step 1/3. In terms of biological role, large subunit of the glutamine-dependent carbamoyl phosphate synthetase (CPSase). CPSase catalyzes the formation of carbamoyl phosphate from the ammonia moiety of glutamine, carbonate, and phosphate donated by ATP, constituting the first step of 2 biosynthetic pathways, one leading to arginine and/or urea and the other to pyrimidine nucleotides. The large subunit (synthetase) binds the substrates ammonia (free or transferred from glutamine from the small subunit), hydrogencarbonate and ATP and carries out an ATP-coupled ligase reaction, activating hydrogencarbonate by forming carboxy phosphate which reacts with ammonia to form carbamoyl phosphate. This Fusobacterium nucleatum subsp. nucleatum (strain ATCC 25586 / DSM 15643 / BCRC 10681 / CIP 101130 / JCM 8532 / KCTC 2640 / LMG 13131 / VPI 4355) protein is Carbamoyl phosphate synthase large chain.